The sequence spans 135 residues: Universal stress protein Aq_178 (135 aa).

The protein belongs to the universal stress protein A family.

The protein is Universal stress protein Aq_178 of Aquifex aeolicus (strain VF5).